Here is a 291-residue protein sequence, read N- to C-terminus: Undecaprenyl-diphosphatase (291 aa).

A run of 8 helical transmembrane segments spans residues 1-21 (MFIIELIKGIILGVVEGLTEF), 48-68 (SAFTFKIVIQLGSVFAAAWVF), 102-122 (LHVLVGMVPAGILGLLFDDFI), 126-146 (LFSVPTVMIGLFVGAIYMIIA), 162-182 (INYFQAFVIGISQAVAMWPGF), 203-223 (SDFTFIMAVPIMLAASGLSLL), 236-256 (FYILGFLAAFTVGLIAIKTFL), and 267-287 (FAIYRIVLVIFIAILYFGFGI).

It belongs to the UppP family.

It localises to the cell membrane. The enzyme catalyses di-trans,octa-cis-undecaprenyl diphosphate + H2O = di-trans,octa-cis-undecaprenyl phosphate + phosphate + H(+). Functionally, catalyzes the dephosphorylation of undecaprenyl diphosphate (UPP). Confers resistance to bacitracin. This is Undecaprenyl-diphosphatase from Staphylococcus aureus (strain MSSA476).